The chain runs to 498 residues: Calcium-dependent protein kinase 22 (498 aa).

Gly2 carries the N-myristoyl glycine lipid modification. In terms of domain architecture, Protein kinase spans 36-305 (YSFGDELGKG…AADVLEHPWM (270 aa)). Residues 42–50 (LGKGNFGTT) and Lys65 contribute to the ATP site. The Proton acceptor role is filled by Asp164. Ser204 is modified (phosphoserine). The segment at 309-339 (APDKPIDNVVLSRMKQFRAMNKLKKLALKVI) is autoinhibitory domain. EF-hand domains follow at residues 346-381 (EEIKGLKTMFENMDMDKSGSITYEELKMGLNRHGSK), 382-417 (LSETEVKQLMEAADVDGNGTIDYIEFISATMHRHRL), 418-453 (ERDEHLYKAFQYFDKDGSGHITKEEVEIAMKEHGMG), and 454-488 (DEANAKDLISEFDKNNDGKIDYEEFCTMMRNGILQ). Ca(2+) contacts are provided by Asp359, Asp361, Ser363, Ser365, Glu370, Asp395, Asp397, Asn399, Thr401, Glu406, Asp431, Asp433, Ser435, His437, Glu442, Asp466, Asn468, Asp470, Lys472, and Glu477.

This sequence belongs to the protein kinase superfamily. Ser/Thr protein kinase family. CDPK subfamily.

The protein localises to the membrane. The enzyme catalyses L-seryl-[protein] + ATP = O-phospho-L-seryl-[protein] + ADP + H(+). It catalyses the reaction L-threonyl-[protein] + ATP = O-phospho-L-threonyl-[protein] + ADP + H(+). Activated by calcium. Autophosphorylation may play an important role in the regulation of the kinase activity. In terms of biological role, may play a role in signal transduction pathways that involve calcium as a second messenger. This is Calcium-dependent protein kinase 22 (CPK22) from Arabidopsis thaliana (Mouse-ear cress).